A 565-amino-acid chain; its full sequence is Mediator of RNA polymerase II transcription subunit 17 (565 aa).

Polar residues predominate over residues 138-152 (TSLNSDRLGQDSNDN). The tract at residues 138-160 (TSLNSDRLGQDSNDNQESKATDS) is disordered.

It belongs to the Mediator complex subunit 17 family. In terms of assembly, component of the Mediator complex.

It localises to the nucleus. Its function is as follows. Component of the Mediator complex, a coactivator involved in the regulated transcription of nearly all RNA polymerase II-dependent genes. Mediator functions as a bridge to convey information from gene-specific regulatory proteins to the basal RNA polymerase II transcription machinery. Mediator is recruited to promoters by direct interactions with regulatory proteins and serves as a scaffold for the assembly of a functional preinitiation complex with RNA polymerase II and the general transcription factors. The protein is Mediator of RNA polymerase II transcription subunit 17 (SRB4) of Candida albicans (strain SC5314 / ATCC MYA-2876) (Yeast).